We begin with the raw amino-acid sequence, 303 residues long: Glutamyl-Q tRNA(Asp) synthetase (303 aa).

L-glutamate contacts are provided by residues 16–20 and E52; that span reads RFAPS. Positions 19–29 match the 'HIGH' region motif; it reads PSPSGPLHFGS. Residues C108, C110, Y122, and C126 each coordinate Zn(2+). 2 residues coordinate L-glutamate: Y177 and R195. A 'KMSKS' region motif is present at residues 233–237; it reads KLSKQ. Residue K236 coordinates ATP.

The protein belongs to the class-I aminoacyl-tRNA synthetase family. GluQ subfamily. Zn(2+) serves as cofactor.

Catalyzes the tRNA-independent activation of glutamate in presence of ATP and the subsequent transfer of glutamate onto a tRNA(Asp). Glutamate is transferred on the 2-amino-5-(4,5-dihydroxy-2-cyclopenten-1-yl) moiety of the queuosine in the wobble position of the QUC anticodon. The protein is Glutamyl-Q tRNA(Asp) synthetase of Vibrio vulnificus (strain CMCP6).